Reading from the N-terminus, the 316-residue chain is Small ribosomal subunit protein RACK1 (316 aa).

7 WD repeats span residues 4–46 (QMTL…WRLT), 52–93 (YGVP…WDLS), 94–135 (TGQT…WNTL), 137–180 (VCKY…WNLT), 181–221 (NCKL…LWDL), 222–263 (NEGK…WDLE), and 264–312 (GKVV…WQVS).

Belongs to the WD repeat G protein beta family. Ribosomal protein RACK1 subfamily.

The protein is Small ribosomal subunit protein RACK1 of Biomphalaria glabrata (Bloodfluke planorb).